A 92-amino-acid polypeptide reads, in one-letter code: Small ribosomal subunit protein uS19 (92 aa).

It belongs to the universal ribosomal protein uS19 family.

Protein S19 forms a complex with S13 that binds strongly to the 16S ribosomal RNA. The protein is Small ribosomal subunit protein uS19 of Nitrobacter winogradskyi (strain ATCC 25391 / DSM 10237 / CIP 104748 / NCIMB 11846 / Nb-255).